Consider the following 220-residue polypeptide: Protein-L-isoaspartate O-methyltransferase (220 aa).

S64 is an active-site residue.

It belongs to the methyltransferase superfamily. L-isoaspartyl/D-aspartyl protein methyltransferase family.

It localises to the cytoplasm. The enzyme catalyses [protein]-L-isoaspartate + S-adenosyl-L-methionine = [protein]-L-isoaspartate alpha-methyl ester + S-adenosyl-L-homocysteine. In terms of biological role, catalyzes the methyl esterification of L-isoaspartyl residues in peptides and proteins that result from spontaneous decomposition of normal L-aspartyl and L-asparaginyl residues. It plays a role in the repair and/or degradation of damaged proteins. In Methanoculleus marisnigri (strain ATCC 35101 / DSM 1498 / JR1), this protein is Protein-L-isoaspartate O-methyltransferase.